The sequence spans 157 residues: Ribosome maturation factor RimP (157 aa).

The protein belongs to the RimP family.

The protein localises to the cytoplasm. In terms of biological role, required for maturation of 30S ribosomal subunits. The protein is Ribosome maturation factor RimP of Synechococcus sp. (strain JA-3-3Ab) (Cyanobacteria bacterium Yellowstone A-Prime).